The chain runs to 106 residues: PAT complex subunit Asterix (106 aa).

The span at 1-10 (MSANSMSDPR) shows a compositional bias: polar residues. Positions 1 to 29 (MSANSMSDPRSPNKVLRYKPPPSECNPAL) are disordered. Ser-2 carries the N-acetylserine modification. The Cytoplasmic portion of the chain corresponds to 2 to 32 (SANSMSDPRSPNKVLRYKPPPSECNPALDDP). The chain crosses the membrane as a helical span at residues 33-51 (TPDYMNLLGMIFSMCGLML). A topological domain (lumenal) is located at residue Lys-52. The chain crosses the membrane as a helical span at residues 53 to 70 (LKWCAWVAVYCSFISFAN). Residues 71-74 (SRSS) are Cytoplasmic-facing. Residues 75 to 95 (EDTKQMMSSFMLSISAVVMSY) traverse the membrane as a helical segment. Over 96-106 (LQNPQPMTPPW) the chain is Lumenal.

Belongs to the Asterix family. In terms of assembly, component of the PAT complex, composed of WDR83OS/Asterix and CCDC47. The PAT complex is part of the multi-pass translocon (MPT) complex, composed of three subcomplexes, the GEL complex (composed of RAB5IF/OPTI and TMCO1), the BOS complex (composed of NCLN/Nicalin, NOMO1 and TMEM147) and the PAT complex (composed of WDR83OS/Asterix and CCDC47). The MPT complex associates with the SEC61 complex.

It is found in the endoplasmic reticulum membrane. Functionally, component of the multi-pass translocon (MPT) complex that mediates insertion of multi-pass membrane proteins into the lipid bilayer of membranes. The MPT complex takes over after the SEC61 complex: following membrane insertion of the first few transmembrane segments of proteins by the SEC61 complex, the MPT complex occludes the lateral gate of the SEC61 complex to promote insertion of subsequent transmembrane regions. Within the MPT complex, the PAT subcomplex sequesters any highly polar regions in the transmembrane domains away from the non-polar membrane environment until they can be buried in the interior of the fully assembled protein. Within the PAT subcomplex, WDR83OS/Asterix binds to and redirects the substrate to a location behind the SEC61 complex. The polypeptide is PAT complex subunit Asterix (WDR83OS) (Sus scrofa (Pig)).